The sequence spans 318 residues: Cis-3-alkyl-4-alkyloxetan-2-one decarboxylase (318 aa).

The AB hydrolase-1 domain maps to 30-275 (PVVMVHGNPS…ADCGHYILED (246 aa)).

Belongs to the AB hydrolase superfamily.

It catalyses the reaction a cis-3-alkyl-4-alkyloxetan-2-one = a cis-alkene + CO2. Its function is as follows. Involved in olefin biosynthesis. Catalyzes the elimination of carbon dioxide from beta-lactones to form the final olefin product. The S.oneidensis oleABCD genes produce 3,6,9,12,15,19,22,25,28-hentriacontanonaene, which may aid the cells in adapting to a sudden drop in temperature. The protein is Cis-3-alkyl-4-alkyloxetan-2-one decarboxylase of Shewanella oneidensis (strain ATCC 700550 / JCM 31522 / CIP 106686 / LMG 19005 / NCIMB 14063 / MR-1).